A 91-amino-acid polypeptide reads, in one-letter code: Small ribosomal subunit protein uS19 (91 aa).

The protein belongs to the universal ribosomal protein uS19 family.

In terms of biological role, protein S19 forms a complex with S13 that binds strongly to the 16S ribosomal RNA. The protein is Small ribosomal subunit protein uS19 of Methylacidiphilum infernorum (isolate V4) (Methylokorus infernorum (strain V4)).